A 336-amino-acid polypeptide reads, in one-letter code: Ketol-acid reductoisomerase (NADP(+)) (336 aa).

The KARI N-terminal Rossmann domain occupies 1–182 (MAVIYYDKDA…GVTRAGVIET (182 aa)). Residues 25-28 (YGSQ), R48, S51, S53, and 83-86 (DENQ) each bind NADP(+). H108 is a catalytic residue. Position 134 (G134) interacts with NADP(+). The region spanning 183 to 328 (TFKEETETDL…KELRKMMPWL (146 aa)) is the KARI C-terminal knotted domain. D191, E195, E227, and E231 together coordinate Mg(2+). Substrate is bound at residue S252.

Belongs to the ketol-acid reductoisomerase family. It depends on Mg(2+) as a cofactor.

It carries out the reaction (2R)-2,3-dihydroxy-3-methylbutanoate + NADP(+) = (2S)-2-acetolactate + NADPH + H(+). The catalysed reaction is (2R,3R)-2,3-dihydroxy-3-methylpentanoate + NADP(+) = (S)-2-ethyl-2-hydroxy-3-oxobutanoate + NADPH + H(+). The protein operates within amino-acid biosynthesis; L-isoleucine biosynthesis; L-isoleucine from 2-oxobutanoate: step 2/4. Its pathway is amino-acid biosynthesis; L-valine biosynthesis; L-valine from pyruvate: step 2/4. Involved in the biosynthesis of branched-chain amino acids (BCAA). Catalyzes an alkyl-migration followed by a ketol-acid reduction of (S)-2-acetolactate (S2AL) to yield (R)-2,3-dihydroxy-isovalerate. In the isomerase reaction, S2AL is rearranged via a Mg-dependent methyl migration to produce 3-hydroxy-3-methyl-2-ketobutyrate (HMKB). In the reductase reaction, this 2-ketoacid undergoes a metal-dependent reduction by NADPH to yield (R)-2,3-dihydroxy-isovalerate. This chain is Ketol-acid reductoisomerase (NADP(+)), found in Thermotoga petrophila (strain ATCC BAA-488 / DSM 13995 / JCM 10881 / RKU-1).